Reading from the N-terminus, the 278-residue chain is Myb/SANT-like DNA-binding domain-containing protein 1 (278 aa).

A Myb-like domain is found at 44-131 (RNWTDAEMRG…WPYYLAIDRI (88 aa)). The tract at residues 139–167 (CEGKLPDGQQPGPSTSQTEASLSPSAKST) is disordered. A compositionally biased stretch (polar residues) spans 149 to 166 (PGPSTSQTEASLSPSAKS).

This Mus musculus (Mouse) protein is Myb/SANT-like DNA-binding domain-containing protein 1 (Msantd1).